We begin with the raw amino-acid sequence, 158 residues long: U4/U6.U5 small nuclear ribonucleoprotein 27 kDa protein (158 aa).

Basic residues predominate over residues 1–30 (MGRSRSRTPPRRERRRSRSSSRDRERRRRE). The disordered stretch occupies residues 1 to 100 (MGRSRSRTPP…ISAEDMQGKT (100 aa)). Over residues 31 to 41 (RERSRSRDRDR) the composition is skewed to basic and acidic residues. Positions 42–62 (RRSRSRSPHRRRSRSPRRHRS) are enriched in basic residues. The segment covering 69–86 (RQKDRRDDDRKDVKEKPA) has biased composition (basic and acidic residues).

Belongs to the SNUT3 family. In terms of assembly, part of a tri-snRNP complex.

Its subcellular location is the nucleus. May play a role in mRNA splicing. This is U4/U6.U5 small nuclear ribonucleoprotein 27 kDa protein (snrnp27) from Danio rerio (Zebrafish).